The sequence spans 181 residues: uncharacterized protein (181 aa).

Residues 133–153 (MCVCVHVCACVYVCMCVLVCM) form a helical membrane-spanning segment.

The protein localises to the membrane. This is an uncharacterized protein from Homo sapiens (Human).